The chain runs to 433 residues: Probable imidazolonepropionase (433 aa).

Residues tyrosine 160 and histidine 193 each contribute to the 4-imidazolone-5-propanoate site. An N-formimidoyl-L-glutamate-binding site is contributed by tyrosine 160. Histidine 261 contacts Fe(3+). Residue histidine 261 coordinates Zn(2+). Residue glutamate 264 coordinates 4-imidazolone-5-propanoate. Aspartate 335 contacts Fe(3+). Aspartate 335 is a binding site for Zn(2+). Residue asparagine 337 participates in N-formimidoyl-L-glutamate binding.

The protein belongs to the metallo-dependent hydrolases superfamily. HutI family. The cofactor is Zn(2+). Fe(3+) is required as a cofactor.

It carries out the reaction 4-imidazolone-5-propanoate + H2O = N-formimidoyl-L-glutamate. Its pathway is amino-acid degradation; L-histidine degradation into L-glutamate; N-formimidoyl-L-glutamate from L-histidine: step 3/3. The polypeptide is Probable imidazolonepropionase (amdhd1) (Danio rerio (Zebrafish)).